Reading from the N-terminus, the 390-residue chain is Pyruvate dehydrogenase E1 component subunit alpha, somatic form, mitochondrial (390 aa).

Residues 1 to 29 (MRKMLAAVSRVLAGAAQKPASRVLVASRN) constitute a mitochondrion transit peptide. At lysine 63 the chain carries N6-acetyllysine; alternate. At lysine 63 the chain carries N6-succinyllysine; alternate. Histidine 92, tyrosine 118, arginine 119, alanine 157, glycine 165, valine 167, aspartate 196, glycine 197, alanine 198, asparagine 225, and tyrosine 227 together coordinate pyruvate. Positions 118 and 119 each coordinate thiamine diphosphate. The thiamine diphosphate site is built by glycine 165, valine 167, aspartate 196, glycine 197, alanine 198, and asparagine 225. Aspartate 196 serves as a coordination point for Mg(2+). Mg(2+) is bound by residues asparagine 225 and tyrosine 227. Serine 232 bears the Phosphoserine; by PDK1 mark. Lysine 244 carries the post-translational modification N6-acetyllysine; alternate. Lysine 244 is subject to N6-succinyllysine; alternate. At lysine 267 the chain carries N6-acetyllysine. Position 277 is an N6-succinyllysine (lysine 277). Histidine 292 is a binding site for thiamine diphosphate. Serine 293 is modified (phosphoserine; by PDK1, PDK2, PDK3 and PDK4). At serine 295 the chain carries Phosphoserine. Residue serine 300 is modified to Phosphoserine; by PDK1, PDK2, PDK3 and PDK4. Tyrosine 301 is subject to Phosphotyrosine. At lysine 313 the chain carries N6-acetyllysine; alternate. The residue at position 313 (lysine 313) is an N6-succinyllysine; alternate. Lysine 321 and lysine 336 each carry N6-acetyllysine. The residue at position 385 (lysine 385) is an N6-succinyllysine.

In terms of assembly, heterotetramer of two PDHA1 and two PDHB subunits. The heterotetramer interacts with DLAT, and is part of the multimeric pyruvate dehydrogenase complex that contains multiple copies of pyruvate dehydrogenase (E1), dihydrolipoamide acetyltransferase (DLAT, E2) and lipoamide dehydrogenase (DLD, E3). These subunits are bound to an inner core composed of about 48 DLAT and 12 PDHX molecules. Requires thiamine diphosphate as cofactor. It depends on Mg(2+) as a cofactor. Post-translationally, phosphorylation at Ser-232, Ser-293 and Ser-300 by PDK family kinases inactivates the enzyme; for this phosphorylation at a single site is sufficient. Phosphorylation at Ser-293 interferes with access to active site, and thereby inactivates the enzyme. Dephosphorylation at all three sites, i.e. at Ser-232, Ser-293 and Ser-300, is required for reactivation. Acetylation alters the phosphorylation pattern. Deacetylated by SIRT3. In all tissues, but in very low amount in testis.

It is found in the mitochondrion matrix. It catalyses the reaction N(6)-[(R)-lipoyl]-L-lysyl-[protein] + pyruvate + H(+) = N(6)-[(R)-S(8)-acetyldihydrolipoyl]-L-lysyl-[protein] + CO2. With respect to regulation, pyruvate dehydrogenase activity is inhibited by phosphorylation of PDHA1; it is reactivated by dephosphorylation. In terms of biological role, the pyruvate dehydrogenase complex catalyzes the overall conversion of pyruvate to acetyl-CoA and CO(2), and thereby links the glycolytic pathway to the tricarboxylic cycle. This chain is Pyruvate dehydrogenase E1 component subunit alpha, somatic form, mitochondrial (Pdha1), found in Rattus norvegicus (Rat).